The primary structure comprises 370 residues: DNA replication and repair protein RecF (370 aa).

30-37 is a binding site for ATP; the sequence is GENAQGKT.

The protein belongs to the RecF family.

It localises to the cytoplasm. In terms of biological role, the RecF protein is involved in DNA metabolism; it is required for DNA replication and normal SOS inducibility. RecF binds preferentially to single-stranded, linear DNA. It also seems to bind ATP. The sequence is that of DNA replication and repair protein RecF from Listeria monocytogenes serotype 4b (strain CLIP80459).